We begin with the raw amino-acid sequence, 972 residues long: Leucine--tRNA ligase (972 aa).

The 'HIGH' region motif lies at 78 to 89; it reads PYPSGDGLHVGH. A 'KMSKS' region motif is present at residues 741–745; it reads KIGKS. ATP is bound at residue K744.

The protein belongs to the class-I aminoacyl-tRNA synthetase family.

The protein resides in the cytoplasm. It catalyses the reaction tRNA(Leu) + L-leucine + ATP = L-leucyl-tRNA(Leu) + AMP + diphosphate. In Mycobacterium leprae (strain Br4923), this protein is Leucine--tRNA ligase.